The sequence spans 1087 residues: Exportin-7-A (1087 aa).

Residues 30–96 (AEKALVEFTN…RNYVLTYLAT (67 aa)) enclose the Importin N-terminal domain.

The protein belongs to the exportin family. Expressed in oocytes (at protein level).

Its subcellular location is the cytoplasm. It is found in the nucleus. Its function is as follows. Mediates the nuclear export of proteins (cargos) with broad substrate specificity. This is Exportin-7-A (xpo7-a) from Xenopus laevis (African clawed frog).